The primary structure comprises 166 residues: Transcriptional repressor NrdR (166 aa).

A zinc finger spans residues 3 to 34; sequence CPFCGFSDSRVLDSRPTVEGNSIRRRRECCGC. The region spanning 49 to 139 is the ATP-cone domain; it reads LIVVKKDGRR…VYREFRDAES (91 aa).

Belongs to the NrdR family. It depends on Zn(2+) as a cofactor.

Its function is as follows. Negatively regulates transcription of bacterial ribonucleotide reductase nrd genes and operons by binding to NrdR-boxes. This chain is Transcriptional repressor NrdR, found in Pelotomaculum thermopropionicum (strain DSM 13744 / JCM 10971 / SI).